Here is a 181-residue protein sequence, read N- to C-terminus: Iron sulfur cluster assembly protein 1, mitochondrial (181 aa).

The tract at residues 159 to 181 is disordered; it reads RKTKNPTLGAEAAETPAAATATA. Residues 168-181 show a composition bias toward low complexity; that stretch reads AEAAETPAAATATA.

Belongs to the NifU family. As to quaternary structure, component of the core Fe-S cluster (ISC) assembly machinery. Requires [2Fe-2S] cluster as cofactor.

It is found in the mitochondrion matrix. It participates in cofactor biosynthesis; iron-sulfur cluster biosynthesis. Its function is as follows. Scaffold protein for the de novo synthesis of iron-sulfur (Fe-S) clusters within mitochondria, which is required for maturation of both mitochondrial and cytoplasmic [2Fe-2S] and [4Fe-4S] proteins. First, a [2Fe-2S] cluster is transiently assembled on the scaffold protein ISU1. In a second step, the cluster is released from ISU1, transferred to a glutaredoxin, followed by the formation of mitochondrial [2Fe-2S] proteins, the synthesis of [4Fe-4S] clusters and their target-specific insertion into the recipient apoproteins. Cluster assembly on ISU1 depends on the function of the cysteine desulfurase complex NFS1-ISD11, which serves as the sulfur donor for cluster synthesis, the iron-binding protein frataxin as the putative iron donor, and the electron transfer chain comprised of ferredoxin reductase and ferredoxin, which receive their electrons from NADH. The protein is Iron sulfur cluster assembly protein 1, mitochondrial (ISU1) of Yarrowia lipolytica (strain CLIB 122 / E 150) (Yeast).